Reading from the N-terminus, the 127-residue chain is Anti-adapter protein IraD (127 aa).

Belongs to the GpW/Gp25 family. IraD subfamily. As to quaternary structure, interacts with RssB.

The protein resides in the cytoplasm. In terms of biological role, inhibits RpoS proteolysis by regulating RssB activity, thereby increasing the stability of the sigma stress factor RpoS during oxidative stress. Its effect on RpoS stability is due to its interaction with RssB, which probably blocks the interaction of RssB with RpoS, and the consequent delivery of the RssB-RpoS complex to the ClpXP protein degradation pathway. This chain is Anti-adapter protein IraD, found in Escherichia coli (strain SMS-3-5 / SECEC).